The following is a 373-amino-acid chain: 3 beta-hydroxysteroid dehydrogenase/Delta 5--&gt;4-isomerase type 4 (373 aa).

The active-site Proton acceptor is Y155. K159 lines the NAD(+) pocket. Residues 288–308 form a helical membrane-spanning segment; the sequence is LPLLYWLAFLLEIVSFFLHPV. The residue at position 350 (K350) is an N6-acetyllysine.

This sequence belongs to the 3-beta-HSD family. In terms of tissue distribution, skin, placenta, also detectable in ovary and adrenal gland.

It localises to the endoplasmic reticulum membrane. Its subcellular location is the mitochondrion membrane. It catalyses the reaction a 3beta-hydroxy-Delta(5)-steroid + NAD(+) = a 3-oxo-Delta(5)-steroid + NADH + H(+). The enzyme catalyses a 3-oxo-Delta(5)-steroid = a 3-oxo-Delta(4)-steroid. The protein operates within lipid metabolism; steroid biosynthesis. Functionally, 3-beta-HSD is a bifunctional enzyme, that catalyzes the oxidative conversion of Delta(5)-ene-3-beta-hydroxy steroid, and the oxidative conversion of ketosteroids. The 3-beta-HSD enzymatic system plays a crucial role in the biosynthesis of all classes of hormonal steroids. The chain is 3 beta-hydroxysteroid dehydrogenase/Delta 5--&gt;4-isomerase type 4 (Hsd3b6) from Rattus norvegicus (Rat).